A 615-amino-acid chain; its full sequence is Integral inner nuclear membrane protein ima1 (615 aa).

3 helical membrane passes run 192–212, 247–267, and 323–343; these read FVLW…SIVW, IFYF…WYKM, and QIHA…ISCL. A disordered region spans residues 357–387; that stretch reads ILKPRKKRQESTSSVHRIGKESSDRKDGISG. The segment covering 374–384 has biased composition (basic and acidic residues); that stretch reads IGKESSDRKDG. The next 2 membrane-spanning stretches (helical) occupy residues 563 to 583 and 586 to 606; these read AKLL…GWRL and FTMF…VMKH.

Its subcellular location is the nucleus inner membrane. Inner nuclear membrane protein that specifically binds to heterochromatic regions and promotes the tethering of centromeric DNA to the SUN-KASH complex. Couples centromeres to the nuclear envelope, thus contributing to their association with the microtubule organizing center attachment site and to the positioning of the nucleus at the cell center by microtubules. The sequence is that of Integral inner nuclear membrane protein ima1 (IMA1) from Schizosaccharomyces pombe (strain 972 / ATCC 24843) (Fission yeast).